The primary structure comprises 513 residues: ATP synthase subunit alpha (513 aa).

Residue 169 to 176 participates in ATP binding; that stretch reads GDRQTGKT.

It belongs to the ATPase alpha/beta chains family. As to quaternary structure, F-type ATPases have 2 components, CF(1) - the catalytic core - and CF(0) - the membrane proton channel. CF(1) has five subunits: alpha(3), beta(3), gamma(1), delta(1), epsilon(1). CF(0) has three main subunits: a(1), b(2) and c(9-12). The alpha and beta chains form an alternating ring which encloses part of the gamma chain. CF(1) is attached to CF(0) by a central stalk formed by the gamma and epsilon chains, while a peripheral stalk is formed by the delta and b chains.

It is found in the cell inner membrane. It carries out the reaction ATP + H2O + 4 H(+)(in) = ADP + phosphate + 5 H(+)(out). Functionally, produces ATP from ADP in the presence of a proton gradient across the membrane. The alpha chain is a regulatory subunit. This is ATP synthase subunit alpha from Aliivibrio fischeri (strain ATCC 700601 / ES114) (Vibrio fischeri).